The following is a 494-amino-acid chain: MPGLCIGILLLIGFGCTTAYKIPTPTVELLETGFSVSIPDEEGVKVVAFNVNRNRNFTSFINEGQYNVRLTEPQNGRWTTNFSSVPLRSQDVLYLWTSVQHQKAVYQDLAQPLPVCNLGGEYRPRGCSPGDDDFTDDNQLSTEDSALEPTAPSVCEPSESQVSPQIGVSICKGQLLFEETFDQLNESLWIHDVRLPLDSKDAEFVLYDGKAKVHDGNLVIEPLLWSSYRPDLSIANSRLDLSERCTGTHNRIKECILHSTGSGPSGIMPPIVTPRISTKETFAFQYGRIEIRAKLPKGDWIVPLLLLEPLTEWYGQSGYESGQLRVALARGNSVLRMPRGKLVDGRSLYGGPVLSTDAHQREDLWLSKRKISHFGDDFHTYSLDWSSNRLLFSVDGQVYGEMLNGFTELDENPRWKQGGPMAPFDKMFYISLGVSVGGFGDFVDHLRTATYEKPWANYHPQAKLQFHQAQDQWLPTWKQPALKIDYVRVFATDN.

The N-terminal stretch at 1-19 is a signal peptide; that stretch reads MPGLCIGILLLIGFGCTTA. The CBM39 domain occupies 20-120; it reads YKIPTPTVEL…QPLPVCNLGG (101 aa). N-linked (GlcNAc...) asparagine glycosylation is found at N56 and N81. The tract at residues 126–160 is disordered; it reads GCSPGDDDFTDDNQLSTEDSALEPTAPSVCEPSES. The 360-residue stretch at 135–494 folds into the GH16 domain; that stretch reads TDDNQLSTED…DYVRVFATDN (360 aa). Residue N185 is glycosylated (N-linked (GlcNAc...) asparagine).

This sequence belongs to the insect beta-1,3-glucan binding protein family.

The protein resides in the cell membrane. Plays a key role in innate immunity by acting as a pattern recognition receptor for beta-1,3-glucan from fungi and lipopolysaccharide from Gram-negative bacteria. Upon recognition of invading microorganism-derived products, acts upstream of protease spz processing enzyme SPE to activate the Toll pathway and to induce the expression of antimicrobial peptides drosomycin, cecropin and attacin. This Drosophila melanogaster (Fruit fly) protein is Gram-negative bacteria-binding protein 1.